We begin with the raw amino-acid sequence, 274 residues long: Nickel/cobalt efflux system RcnA (274 aa).

Topologically, residues 1 to 12 (MTEFTTLLQQGN) are periplasmic. A helical transmembrane segment spans residues 13–33 (AWFFIPSAILLGALHGLEPGH). The Cytoplasmic segment spans residues 34–56 (SKTMMAAFIIAIKGTIKQAVMLG). The helical transmembrane segment at 57–77 (LAATISHTAVVWLIAFGGMVI) threads the bilayer. Topologically, residues 78-86 (SKRFTAQSA) are periplasmic. A helical transmembrane segment spans residues 87 to 107 (EPWLQLISAVIIISTAFWMFW). The Cytoplasmic segment spans residues 108-174 (RTWRGERNWL…FDGREVTNWQ (67 aa)). The span at 127–137 (HHHHDHEDHHD) shows a compositional bias: basic and acidic residues. The segment at 127 to 153 (HHHHDHEDHHDHGHHHHHEHGEYQDAH) is disordered. A helical transmembrane segment spans residues 175 to 195 (ILLFGLTGGLIPCPAAITVLL). Residues 196–209 (ICIQLKALTLGATL) lie on the Periplasmic side of the membrane. The chain crosses the membrane as a helical span at residues 210-230 (VVSFSLGLALTLVTVSVGAAI). At 231–251 (SVQQVAKRWSGFNTLAKRAPY) the chain is on the cytoplasmic side. Residues 252–272 (FSSLLIGLVGVYMGVHGFMGI) traverse the membrane as a helical segment. The Periplasmic portion of the chain corresponds to 273 to 274 (MR).

It belongs to the NiCoT transporter (TC 2.A.52) family. RcnA subfamily.

Its subcellular location is the cell inner membrane. In terms of biological role, efflux system for nickel and cobalt. In Escherichia coli O6:K15:H31 (strain 536 / UPEC), this protein is Nickel/cobalt efflux system RcnA (rcnA).